Consider the following 372-residue polypeptide: Flagellar P-ring protein (372 aa).

A signal peptide spans 1–26 (MNLSSLPFRLLAAAVALCAIAAPASA).

Belongs to the FlgI family. The basal body constitutes a major portion of the flagellar organelle and consists of four rings (L,P,S, and M) mounted on a central rod.

The protein resides in the periplasm. The protein localises to the bacterial flagellum basal body. Functionally, assembles around the rod to form the L-ring and probably protects the motor/basal body from shearing forces during rotation. This is Flagellar P-ring protein from Xanthomonas campestris pv. campestris (strain B100).